The following is a 175-amino-acid chain: uncharacterized protein (175 aa).

This is an uncharacterized protein from Bacillus subtilis (strain 168).